The chain runs to 519 residues: 3-octaprenyl-4-hydroxybenzoate carboxy-lyase (519 aa).

N177 provides a ligand contact to Mn(2+). Prenylated FMN-binding positions include 180–182 (IYR), 194–196 (RWL), and 199–200 (RG). E243 is a binding site for Mn(2+). D318 (proton donor) is an active-site residue.

It belongs to the UbiD family. In terms of assembly, homohexamer. Requires prenylated FMN as cofactor. The cofactor is Mn(2+).

It is found in the cell membrane. The catalysed reaction is a 4-hydroxy-3-(all-trans-polyprenyl)benzoate + H(+) = a 2-(all-trans-polyprenyl)phenol + CO2. Its pathway is cofactor biosynthesis; ubiquinone biosynthesis. Catalyzes the decarboxylation of 3-octaprenyl-4-hydroxy benzoate to 2-octaprenylphenol, an intermediate step in ubiquinone biosynthesis. In Burkholderia pseudomallei (strain 1710b), this protein is 3-octaprenyl-4-hydroxybenzoate carboxy-lyase.